The sequence spans 529 residues: UDP-glucuronosyltransferase 2B1 (529 aa).

The first 23 residues, 1 to 23, serve as a signal peptide directing secretion; it reads MSMKQTSVFLLIQLICYFRPGAC. Residues Asn-134 and Asn-316 are each glycosylated (N-linked (GlcNAc...) asparagine). Residues 494–510 form a helical membrane-spanning segment; that stretch reads VIGFLLLCVVGVVFIIT.

The protein belongs to the UDP-glycosyltransferase family.

It is found in the endoplasmic reticulum membrane. It carries out the reaction glucuronate acceptor + UDP-alpha-D-glucuronate = acceptor beta-D-glucuronoside + UDP + H(+). It catalyses the reaction 17beta-estradiol + UDP-alpha-D-glucuronate = 17beta-estradiol 17-O-(beta-D-glucuronate) + UDP + H(+). In terms of biological role, UDP-glucuronosyltransferase (UGT) that catalyzes phase II biotransformation reactions in which lipophilic substrates are conjugated with glucuronic acid to increase the metabolite's water solubility, thereby facilitating excretion into either the urine or bile. Essential for the elimination and detoxification of drugs, xenobiotics and endogenous compounds. Catalyzes the glucuronidation of the endogenous estrogen hormone estradiol. The protein is UDP-glucuronosyltransferase 2B1 of Rattus norvegicus (Rat).